The sequence spans 651 residues: L-aspartate oxidase, chloroplastic (651 aa).

Residues 1–74 (MAAHVSTGNI…PISETSKPIR (74 aa)) constitute a chloroplast transit peptide. FAD is bound by residues 92–95 (SGVA), K114, 121–128 (NTNYAQGG), and D292. Catalysis depends on R368, which acts as the Proton donor/acceptor. FAD contacts are provided by residues E453 and 469–470 (SL).

This sequence belongs to the FAD-dependent oxidoreductase 2 family. NadB subfamily. As to quaternary structure, interacts in vitro with QS. FAD is required as a cofactor.

Its subcellular location is the plastid. The protein resides in the chloroplast. The catalysed reaction is L-aspartate + O2 = iminosuccinate + H2O2. It participates in cofactor biosynthesis; NAD(+) biosynthesis; iminoaspartate from L-aspartate (oxidase route): step 1/1. Its function is as follows. Catalyzes the oxidation of L-aspartate to iminoaspartate. Can complement nadB-deficient E.coli mutant. Plays a role in stomatal immunity. In Arabidopsis thaliana (Mouse-ear cress), this protein is L-aspartate oxidase, chloroplastic.